We begin with the raw amino-acid sequence, 331 residues long: UPF0194 membrane protein YbhG (331 aa).

Positions Met-1–Ala-15 are cleaved as a signal peptide. The stretch at Glu-107 to Ala-208 forms a coiled coil.

The protein belongs to the UPF0194 family.

The protein resides in the periplasm. The sequence is that of UPF0194 membrane protein YbhG from Escherichia coli O139:H28 (strain E24377A / ETEC).